We begin with the raw amino-acid sequence, 316 residues long: Methionyl-tRNA formyltransferase (316 aa).

A (6S)-5,6,7,8-tetrahydrofolate-binding site is contributed by G111–P114.

Belongs to the Fmt family.

The catalysed reaction is L-methionyl-tRNA(fMet) + (6R)-10-formyltetrahydrofolate = N-formyl-L-methionyl-tRNA(fMet) + (6S)-5,6,7,8-tetrahydrofolate + H(+). In terms of biological role, attaches a formyl group to the free amino group of methionyl-tRNA(fMet). The formyl group appears to play a dual role in the initiator identity of N-formylmethionyl-tRNA by promoting its recognition by IF2 and preventing the misappropriation of this tRNA by the elongation apparatus. The sequence is that of Methionyl-tRNA formyltransferase from Chlamydia trachomatis serovar A (strain ATCC VR-571B / DSM 19440 / HAR-13).